Here is a 671-residue protein sequence, read N- to C-terminus: UvrABC system protein C (671 aa).

In terms of domain architecture, GIY-YIG spans 16–95 (TTPGVYRFRD…IKEFKPRFNV (80 aa)). Residues 207–242 (KRFISRLEKDMAAAVAELDYERAAGLRDDIIALRKV) enclose the UVR domain.

Belongs to the UvrC family. Interacts with UvrB in an incision complex.

The protein resides in the cytoplasm. Its function is as follows. The UvrABC repair system catalyzes the recognition and processing of DNA lesions. UvrC both incises the 5' and 3' sides of the lesion. The N-terminal half is responsible for the 3' incision and the C-terminal half is responsible for the 5' incision. In Paenarthrobacter aurescens (strain TC1), this protein is UvrABC system protein C.